The primary structure comprises 338 residues: TPR repeat-containing protein MJ0941 (338 aa).

8 TPR repeats span residues 27-62 (LEAV…EPDF), 63-96 (YLAL…ESKN), 97-130 (PITW…ENRF), 131-164 (LSAF…TPNF), 165-198 (VPMW…KPHD), 199-232 (KNAL…LNVK), 268-301 (VALW…QPHY), and 302-335 (IKAL…IHKD).

The protein is TPR repeat-containing protein MJ0941 of Methanocaldococcus jannaschii (strain ATCC 43067 / DSM 2661 / JAL-1 / JCM 10045 / NBRC 100440) (Methanococcus jannaschii).